The chain runs to 156 residues: MNVIEGKLNLTGNERVAVIASRFNHLITDRLVEGARDSFVRHGGKDEHLDLILVPGAFELPFALEKVLAQGDYDGVCCLGAIIRGSTPHFDYVSAEATKGIANVTLKYGAAVTFGVLTTDNIEQAIERAGTKVGNKGFEAMTGLIEMMNLYKNIGA.

5-amino-6-(D-ribitylamino)uracil-binding positions include Phe-23, 57–59 (AFE), and 81–83 (AII). A (2S)-2-hydroxy-3-oxobutyl phosphate-binding site is contributed by 86 to 87 (ST). The Proton donor role is filled by His-89. Phe-114 lines the 5-amino-6-(D-ribitylamino)uracil pocket. Residue Arg-128 participates in (2S)-2-hydroxy-3-oxobutyl phosphate binding.

It belongs to the DMRL synthase family.

The enzyme catalyses (2S)-2-hydroxy-3-oxobutyl phosphate + 5-amino-6-(D-ribitylamino)uracil = 6,7-dimethyl-8-(1-D-ribityl)lumazine + phosphate + 2 H2O + H(+). Its pathway is cofactor biosynthesis; riboflavin biosynthesis; riboflavin from 2-hydroxy-3-oxobutyl phosphate and 5-amino-6-(D-ribitylamino)uracil: step 1/2. Functionally, catalyzes the formation of 6,7-dimethyl-8-ribityllumazine by condensation of 5-amino-6-(D-ribitylamino)uracil with 3,4-dihydroxy-2-butanone 4-phosphate. This is the penultimate step in the biosynthesis of riboflavin. In Wolinella succinogenes (strain ATCC 29543 / DSM 1740 / CCUG 13145 / JCM 31913 / LMG 7466 / NCTC 11488 / FDC 602W) (Vibrio succinogenes), this protein is 6,7-dimethyl-8-ribityllumazine synthase.